Consider the following 430-residue polypeptide: Elongation factor Tu (430 aa).

The 208-residue stretch at 13-220 (RPHLNIGTIG…ACDKYIALPE (208 aa)) folds into the tr-type G domain. The tract at residues 22 to 29 (GHVDHGKT) is G1. 22–29 (GHVDHGKT) lines the GTP pocket. T29 contacts Mg(2+). Positions 66-70 (GITIS) are G2. The interval 87-90 (DCPG) is G3. GTP is bound by residues 87-91 (DCPGH) and 142-145 (NKCD). Residues 142-145 (NKCD) are G4. The tract at residues 188 to 190 (SAL) is G5.

It belongs to the TRAFAC class translation factor GTPase superfamily. Classic translation factor GTPase family. EF-Tu/EF-1A subfamily. In terms of assembly, monomer.

The protein localises to the cytoplasm. It carries out the reaction GTP + H2O = GDP + phosphate + H(+). Functionally, GTP hydrolase that promotes the GTP-dependent binding of aminoacyl-tRNA to the A-site of ribosomes during protein biosynthesis. The chain is Elongation factor Tu from Neorickettsia sennetsu (strain ATCC VR-367 / Miyayama) (Ehrlichia sennetsu).